The following is a 37-amino-acid chain: Large ribosomal subunit protein bL36 (37 aa).

Belongs to the bacterial ribosomal protein bL36 family.

The protein is Large ribosomal subunit protein bL36 of Aquifex aeolicus (strain VF5).